Reading from the N-terminus, the 1238-residue chain is Inner capsid protein VP2 (1238 aa).

The tract at residues 1 to 35 (MSTSAKKTPESKTEDKIEPVIEQTSNDKPEPPPNK) is disordered. Residues 7–30 (KTPESKTEDKIEPVIEQTSNDKPE) are compositionally biased toward basic and acidic residues.

The protein belongs to the turreted BTV-fold inner capsid family. Homodecamer; each decamer is made up of two conformers of VP2, called VP2A and VP2B. 12 homodecamers assemble to form an icosahedral capsid.

It is found in the virion. Functionally, inner capsid protein that self-assembles to form an icosahedral capsid with a T=2 symmetry, which consists of 120 copies of VP2, with channels at each of its five-fold vertices. This capsid constitutes the innermost concentric layer of the viral mature particle. This Cryphonectria parasitica (Chestnut blight fungus) protein is Inner capsid protein VP2 (S2).